We begin with the raw amino-acid sequence, 543 residues long: MARYIFITGGVVSSLGKGLASAALGALLQARGYKVRLRKLDPYLNLDPGTMSPYQHGEVFVTDDGAETDLDLGHYERFTGRPATRQDNITTGRIYQDILTRERRGDYLGATIQVIPHVTNAIKAFILDGNDDHDFVLCEIGGTVGDIEGLPFFEAIRQLKNDLPRGHAIYVHLTLLPFIPSAGELKTKPTQHSVKELRSIGIQPDILLCRTDREIPAEERRKLGLFCNVRESAVIEARDADNIYAVPEVYHAAGLDDEVLAAFGIEPAAPPALKGWHDINERIRNPEGAVTIAIVGKYTGMKDAYKSLIEALSHGGIANKVKVNLDWIESEVFENEDAAPFLEHVDGILVPGGFGQRGAEGKIKAARFARERHVPYFGICFGMQMAVIEAARNLVGISDANSTEFGPTREPLVGLMTEWLRGSELEKRSKAGDLGGTMRLGAYPAMLKRGSRVSGIYGGAVEISERHRHRYEVNTAYKDRLEQHGLRFSGLSPDGVLPEIVEYQDHPWFIGVQYHPELKSRPFEPHPLFASFIQAAVVQSRLV.

The segment at 1–265 (MARYIFITGG…DDEVLAAFGI (265 aa)) is amidoligase domain. Residue S13 coordinates CTP. S13 is a binding site for UTP. 14-19 (SLGKGL) is a binding site for ATP. Y54 contributes to the L-glutamine binding site. D71 is a binding site for ATP. Positions 71 and 139 each coordinate Mg(2+). CTP-binding positions include 146–148 (DIE), 186–191 (KTKPTQ), and K222. Residues 186–191 (KTKPTQ) and K222 contribute to the UTP site. 238-240 (RDA) provides a ligand contact to ATP. Residues 291 to 542 (TIAIVGKYTG…IQAAVVQSRL (252 aa)) form the Glutamine amidotransferase type-1 domain. L-glutamine is bound at residue G353. C380 (nucleophile; for glutamine hydrolysis) is an active-site residue. L-glutamine-binding positions include 381-384 (FGMQ), E404, and R470. Catalysis depends on residues H515 and E517.

This sequence belongs to the CTP synthase family. As to quaternary structure, homotetramer.

The catalysed reaction is UTP + L-glutamine + ATP + H2O = CTP + L-glutamate + ADP + phosphate + 2 H(+). The enzyme catalyses L-glutamine + H2O = L-glutamate + NH4(+). It carries out the reaction UTP + NH4(+) + ATP = CTP + ADP + phosphate + 2 H(+). The protein operates within pyrimidine metabolism; CTP biosynthesis via de novo pathway; CTP from UDP: step 2/2. With respect to regulation, allosterically activated by GTP, when glutamine is the substrate; GTP has no effect on the reaction when ammonia is the substrate. The allosteric effector GTP functions by stabilizing the protein conformation that binds the tetrahedral intermediate(s) formed during glutamine hydrolysis. Inhibited by the product CTP, via allosteric rather than competitive inhibition. Its function is as follows. Catalyzes the ATP-dependent amination of UTP to CTP with either L-glutamine or ammonia as the source of nitrogen. Regulates intracellular CTP levels through interactions with the four ribonucleotide triphosphates. The sequence is that of CTP synthase from Nitrobacter winogradskyi (strain ATCC 25391 / DSM 10237 / CIP 104748 / NCIMB 11846 / Nb-255).